We begin with the raw amino-acid sequence, 176 residues long: Tubulin polymerization-promoting protein family member 3 (176 aa).

Ala-2 carries the post-translational modification N-acetylalanine. The interval Thr-132 to Gln-152 is disordered. The span at Ser-134–Lys-144 shows a compositional bias: basic and acidic residues.

The protein belongs to the TPPP family. As to expression, expressed in endometrium during the mid-secretory phase (LH + 7) (at protein level).

The protein localises to the cytoplasm. Its subcellular location is the cytoskeleton. Regulator of microtubule dynamic that has microtubule bundling activity. Required for embryo implantation; possibly by regulating beta-catenin. Also required for decidualization via regulation of beta-catenin. This Homo sapiens (Human) protein is Tubulin polymerization-promoting protein family member 3.